A 327-amino-acid polypeptide reads, in one-letter code: Biotin synthase (327 aa).

The region spanning 49–282 (FNKEKIDLCS…KKVIRLCGGR (234 aa)) is the Radical SAM core domain. [4Fe-4S] cluster-binding residues include Cys67, Cys71, and Cys74. [2Fe-2S] cluster-binding residues include Ser110, Cys142, Cys201, and Arg277.

This sequence belongs to the radical SAM superfamily. Biotin synthase family. Homodimer. [4Fe-4S] cluster is required as a cofactor. Requires [2Fe-2S] cluster as cofactor.

The enzyme catalyses (4R,5S)-dethiobiotin + (sulfur carrier)-SH + 2 reduced [2Fe-2S]-[ferredoxin] + 2 S-adenosyl-L-methionine = (sulfur carrier)-H + biotin + 2 5'-deoxyadenosine + 2 L-methionine + 2 oxidized [2Fe-2S]-[ferredoxin]. It participates in cofactor biosynthesis; biotin biosynthesis; biotin from 7,8-diaminononanoate: step 2/2. In terms of biological role, catalyzes the conversion of dethiobiotin (DTB) to biotin by the insertion of a sulfur atom into dethiobiotin via a radical-based mechanism. The polypeptide is Biotin synthase (Methanococcus maripaludis (strain C7 / ATCC BAA-1331)).